A 547-amino-acid polypeptide reads, in one-letter code: Chaperonin GroEL (547 aa).

ATP-binding positions include 30–33, Lys51, 87–91, Gly415, and Asp496; these read TLGP and DGTTT. Residues 527 to 547 are disordered; the sequence is SDKAEPMPMRGGMGGMGGMDF. The span at 537 to 547 shows a compositional bias: gly residues; sequence GGMGGMGGMDF.

This sequence belongs to the chaperonin (HSP60) family. As to quaternary structure, forms a cylinder of 14 subunits composed of two heptameric rings stacked back-to-back. Interacts with the co-chaperonin GroES.

The protein resides in the cytoplasm. The catalysed reaction is ATP + H2O + a folded polypeptide = ADP + phosphate + an unfolded polypeptide.. Together with its co-chaperonin GroES, plays an essential role in assisting protein folding. The GroEL-GroES system forms a nano-cage that allows encapsulation of the non-native substrate proteins and provides a physical environment optimized to promote and accelerate protein folding. This is Chaperonin GroEL from Rickettsia africae (strain ESF-5).